Here is a 635-residue protein sequence, read N- to C-terminus: Iron transport multicopper oxidase FET3 (635 aa).

Residues 1–17 (MMVPLLLSTYFITAVYG) form the signal peptide. Over 18-559 (ATHTFHWTTG…KSIPTGFTKK (542 aa)) the chain is Extracellular. Plastocyanin-like domains are found at residues 42 to 140 (ITCN…FVIE) and 190 to 292 (NLIL…LQLN). Residues Asn-70 and Asn-73 are each glycosylated (N-linked (GlcNAc...) asparagine). Residues His-77 and His-79 each contribute to the Cu cation site. N-linked (GlcNAc...) asparagine glycosylation occurs at Asn-109. 2 residues coordinate Cu cation: His-122 and His-124. N-linked (GlcNAc...) asparagine glycans are attached at residues Asn-194, Asn-198, Asn-244, Asn-265, Asn-292, and Asn-359. The Plastocyanin-like 3 domain occupies 382–501 (NPFIYGTNTN…QGLAVVMVED (120 aa)). Positions 413, 416, and 418 each coordinate Cu cation. The N-linked (GlcNAc...) asparagine glycan is linked to Asn-443. Positions 483, 484, 485, and 489 each coordinate Cu cation. A glycan (N-linked (GlcNAc...) asparagine) is linked at Asn-535. A helical transmembrane segment spans residues 560–580 (GIIAMTFSCLAGVLGITMIAI). The Cytoplasmic portion of the chain corresponds to 581 to 628 (YGFSEIPEPEIKVMRNLHLNPEDVLEKTSSSSVISASNSSSLEDSRNQ).

It belongs to the multicopper oxidase family. The cofactor is Cu cation.

The protein resides in the cell membrane. Its function is as follows. Iron transport multicopper ferroxidase required for Fe(2+) high affinity uptake. Required to oxidize Fe(2+) and release it from the transporter. Essential component of copper-dependent iron transport. This chain is Iron transport multicopper oxidase FET3 (FET3), found in Candida glabrata (strain ATCC 2001 / BCRC 20586 / JCM 3761 / NBRC 0622 / NRRL Y-65 / CBS 138) (Yeast).